Reading from the N-terminus, the 245-residue chain is 8-amino-3,8-dideoxy-manno-octulosonate cytidylyltransferase (245 aa).

This sequence belongs to the KdsB family.

It localises to the cytoplasm. It catalyses the reaction 8-amino-3,8-dideoxy-alpha-D-manno-octulosonate + CTP = CMP-8-amino-3,8-dideoxy-alpha-D-manno-oct-2-ulosonate + diphosphate. It functions in the pathway bacterial outer membrane biogenesis; lipopolysaccharide biosynthesis. In terms of biological role, activates KDO8N (a required 8-carbon sugar) for incorporation into bacterial lipopolysaccharide in the Shewanella genus. This Shewanella baltica (strain OS195) protein is 8-amino-3,8-dideoxy-manno-octulosonate cytidylyltransferase.